The chain runs to 577 residues: Steryl-sulfatase (577 aa).

Residues 1–19 (MLWPCLLALLLSQLNFLCA) form the signal peptide. The Lumenal portion of the chain corresponds to 21–183 (RPGPGPNFLL…GTVFGSAQQV (163 aa)). 2 residues coordinate Ca(2+): Asp-34 and Asp-35. N-linked (GlcNAc...) asparagine glycosylation occurs at Asn-46. Cys-74 is a Ca(2+) binding site. Cys-74 (nucleophile) is an active-site residue. Cys-74 is modified (3-oxoalanine (Cys)). Residue His-135 is part of the active site. 2 disulfide bridges follow: Cys-140–Cys-147 and Cys-169–Cys-241. The helical transmembrane segment at 184-207 (FVVLPMNILGAVLLAMALARWAGL) threads the bilayer. Residues 208-211 (ARPP) lie on the Cytoplasmic side of the membrane. The helical transmembrane segment at 212-233 (GWVFGVTVAAMAAVGGAYVAFL) threads the bilayer. Over 234-577 (YHFRPANCFL…PLACRCAGDG (344 aa)) the chain is Lumenal. Asn-332 carries N-linked (GlcNAc...) asparagine glycosylation. Ca(2+)-binding residues include Asp-341 and His-342. 3 disulfide bridges follow: Cys-445–Cys-488, Cys-480–Cys-486, and Cys-561–Cys-571. A glycan (N-linked (GlcNAc...) asparagine) is linked at Asn-458.

This sequence belongs to the sulfatase family. As to quaternary structure, homodimer. Ca(2+) serves as cofactor. Post-translationally, the conversion to 3-oxoalanine (also known as C-formylglycine, FGly), of a serine or cysteine residue in prokaryotes and of a cysteine residue in eukaryotes, is critical for catalytic activity.

Its subcellular location is the microsome membrane. The protein resides in the endoplasmic reticulum membrane. The enzyme catalyses dehydroepiandrosterone 3-sulfate + H2O = 3beta-hydroxyandrost-5-en-17-one + sulfate + H(+). The catalysed reaction is estrone 3-sulfate + H2O = estrone + sulfate + H(+). Functionally, catalyzes the conversion of sulfated steroid precursors, such as dehydroepiandrosterone sulfate (DHEA-S) and estrone sulfate to the free steroid. This chain is Steryl-sulfatase (Sts), found in Rattus norvegicus (Rat).